Reading from the N-terminus, the 295-residue chain is Shikimate dehydrogenase (NADP(+)) (295 aa).

Residues 22 to 24 and serine 69 each bind shikimate; that span reads SLS. Catalysis depends on lysine 73, which acts as the Proton acceptor. The shikimate site is built by asparagine 94 and aspartate 111. NADP(+) contacts are provided by residues 135-139 and valine 236; that span reads GAGGA. Tyrosine 238 serves as a coordination point for shikimate. An NADP(+)-binding site is contributed by glycine 260.

The protein belongs to the shikimate dehydrogenase family. As to quaternary structure, homodimer.

The enzyme catalyses shikimate + NADP(+) = 3-dehydroshikimate + NADPH + H(+). Its pathway is metabolic intermediate biosynthesis; chorismate biosynthesis; chorismate from D-erythrose 4-phosphate and phosphoenolpyruvate: step 4/7. In terms of biological role, involved in the biosynthesis of the chorismate, which leads to the biosynthesis of aromatic amino acids. Catalyzes the reversible NADPH linked reduction of 3-dehydroshikimate (DHSA) to yield shikimate (SA). This chain is Shikimate dehydrogenase (NADP(+)), found in Streptococcus uberis (strain ATCC BAA-854 / 0140J).